The following is a 79-amino-acid chain: Cell division protein ZapB (79 aa).

Residues 1–78 (MSLEALDQLQ…LNSLLGKMDD (78 aa)) are a coiled coil.

The protein belongs to the ZapB family. As to quaternary structure, homodimer. The ends of the coiled-coil dimer bind to each other, forming polymers. Interacts with FtsZ.

Its subcellular location is the cytoplasm. Non-essential, abundant cell division factor that is required for proper Z-ring formation. It is recruited early to the divisome by direct interaction with FtsZ, stimulating Z-ring assembly and thereby promoting cell division earlier in the cell cycle. Its recruitment to the Z-ring requires functional FtsA or ZipA. In Hamiltonella defensa subsp. Acyrthosiphon pisum (strain 5AT), this protein is Cell division protein ZapB.